Reading from the N-terminus, the 438-residue chain is Argininosuccinate lyase (438 aa).

The protein belongs to the lyase 1 family. Argininosuccinate lyase subfamily.

It localises to the cytoplasm. The catalysed reaction is 2-(N(omega)-L-arginino)succinate = fumarate + L-arginine. It participates in amino-acid biosynthesis; L-arginine biosynthesis; L-arginine from L-ornithine and carbamoyl phosphate: step 3/3. The sequence is that of Argininosuccinate lyase from Clostridium tetani (strain Massachusetts / E88).